Reading from the N-terminus, the 301-residue chain is MNWITNYVRPRINSMLGRREVPENLWIKCPETGEMVFHKDLESNKWVIPASGYHMKMPAKARLADLFDNGEYESLPQPKVAQDPLKFRDSKKYSDRLRDSRLKTEQEDTILAGLGKVQGLKLVAVVHEFNFIGGSLGIAAGEAIVKAFERATSEKCPLVMFPASGGARMQEGILSLMQLPRTTVAVDLLKESGQPYVVVLTNPTTGGVTASYAMLGDIHLAEPGAEIGFAGKRVIEQTLREKLPEGFQTSEYLLEHGMVDMVVKRHDIPETLARVLKILTKKPVSAANDVTRGAIALAASA.

Residues 25 to 294 (LWIKCPETGE…SAANDVTRGA (270 aa)) form the CoA carboxyltransferase N-terminal domain.

It belongs to the AccD/PCCB family. Acetyl-CoA carboxylase is a heterohexamer composed of biotin carboxyl carrier protein (AccB), biotin carboxylase (AccC) and two subunits each of ACCase subunit alpha (AccA) and ACCase subunit beta (AccD).

It localises to the cytoplasm. It catalyses the reaction N(6)-carboxybiotinyl-L-lysyl-[protein] + acetyl-CoA = N(6)-biotinyl-L-lysyl-[protein] + malonyl-CoA. It functions in the pathway lipid metabolism; malonyl-CoA biosynthesis; malonyl-CoA from acetyl-CoA: step 1/1. Component of the acetyl coenzyme A carboxylase (ACC) complex. Biotin carboxylase (BC) catalyzes the carboxylation of biotin on its carrier protein (BCCP) and then the CO(2) group is transferred by the transcarboxylase to acetyl-CoA to form malonyl-CoA. The sequence is that of Acetyl-coenzyme A carboxylase carboxyl transferase subunit beta from Rhizobium etli (strain ATCC 51251 / DSM 11541 / JCM 21823 / NBRC 15573 / CFN 42).